We begin with the raw amino-acid sequence, 295 residues long: UDP-N-acetylenolpyruvoylglucosamine reductase (295 aa).

An FAD-binding PCMH-type domain is found at 23-188 (KVGGPADFLA…ISAKFALKPG (166 aa)). R167 is an active-site residue. S217 functions as the Proton donor in the catalytic mechanism. E287 is an active-site residue.

The protein belongs to the MurB family. The cofactor is FAD.

The protein resides in the cytoplasm. It carries out the reaction UDP-N-acetyl-alpha-D-muramate + NADP(+) = UDP-N-acetyl-3-O-(1-carboxyvinyl)-alpha-D-glucosamine + NADPH + H(+). It participates in cell wall biogenesis; peptidoglycan biosynthesis. Its function is as follows. Cell wall formation. This Streptococcus pyogenes serotype M6 (strain ATCC BAA-946 / MGAS10394) protein is UDP-N-acetylenolpyruvoylglucosamine reductase.